A 187-amino-acid polypeptide reads, in one-letter code: GTPase KRas (187 aa).

GTP-binding positions include 10–18 (GAVGVGKSA), 29–35 (VDEYDPT), 59–60 (AG), and 116–119 (NKCA). Residues 32–40 (YDPTIEDSY) carry the Effector region motif. Residues 168–187 (EKMSKDGKKKKKSKTKCSIL) are disordered. Cys-184 carries the cysteine methyl ester modification. The S-farnesyl cysteine moiety is linked to residue Cys-184. Positions 185–187 (SIL) are cleaved as a propeptide — removed in mature form.

It belongs to the small GTPase superfamily. Ras family.

The protein localises to the cell membrane. It is found in the cytoplasm. The enzyme catalyses GTP + H2O = GDP + phosphate + H(+). Alternates between an inactive form bound to GDP and an active form bound to GTP. Activated by a guanine nucleotide-exchange factor (GEF) and inactivated by a GTPase-activating protein (GAP). Functionally, ras proteins bind GDP/GTP and possess intrinsic GTPase activity. Plays an important role in the regulation of cell proliferation. The protein is GTPase KRas (kras) of Xenopus laevis (African clawed frog).